The primary structure comprises 417 residues: NADH-quinone oxidoreductase subunit D (417 aa).

This sequence belongs to the complex I 49 kDa subunit family. In terms of assembly, NDH-1 is composed of 14 different subunits. Subunits NuoB, C, D, E, F, and G constitute the peripheral sector of the complex.

Its subcellular location is the cell inner membrane. The catalysed reaction is a quinone + NADH + 5 H(+)(in) = a quinol + NAD(+) + 4 H(+)(out). Functionally, NDH-1 shuttles electrons from NADH, via FMN and iron-sulfur (Fe-S) centers, to quinones in the respiratory chain. The immediate electron acceptor for the enzyme in this species is believed to be ubiquinone. Couples the redox reaction to proton translocation (for every two electrons transferred, four hydrogen ions are translocated across the cytoplasmic membrane), and thus conserves the redox energy in a proton gradient. The polypeptide is NADH-quinone oxidoreductase subunit D (Burkholderia multivorans (strain ATCC 17616 / 249)).